The chain runs to 913 residues: Chitin synthase 1 (913 aa).

The segment at 1–135 (MAYRGGGPND…QQPGAQTGGL (135 aa)) is disordered. N-linked (GlcNAc...) asparagine glycosylation occurs at Asn25. The segment covering 41–56 (RDPHARGTSPYEHHLG) has biased composition (basic and acidic residues). N-linked (GlcNAc...) asparagine glycosylation is present at Asn539. The next 7 membrane-spanning stretches (helical) occupy residues 566 to 586 (FFFH…WFSL), 625 to 645 (IINS…FVLA), 658 to 678 (IASF…SGYL), 712 to 732 (VILV…FMYL), 740 to 760 (SFPY…VYAF), 840 to 860 (TGLV…ITTD), and 881 to 901 (FLLY…LWFL).

This sequence belongs to the chitin synthase family. Class III subfamily.

The protein resides in the cell membrane. It catalyses the reaction [(1-&gt;4)-N-acetyl-beta-D-glucosaminyl](n) + UDP-N-acetyl-alpha-D-glucosamine = [(1-&gt;4)-N-acetyl-beta-D-glucosaminyl](n+1) + UDP + H(+). Its function is as follows. Polymerizes chitin, a structural polymer of the cell wall and septum, by transferring the sugar moiety of UDP-GlcNAc to the non-reducing end of the growing chitin polymer. Plays a role in cell wall integrity and is involved in tolerance to hyperosmotic conditions. Required to successfully penetrate the host plants and thus plays a key role in pathogenicity. In Verticillium dahliae (strain VdLs.17 / ATCC MYA-4575 / FGSC 10137) (Verticillium wilt), this protein is Chitin synthase 1.